Here is a 258-residue protein sequence, read N- to C-terminus: Imidazole glycerol phosphate synthase subunit HisF (258 aa).

Residues D11 and D130 contribute to the active site.

Belongs to the HisA/HisF family. Heterodimer of HisH and HisF.

The protein localises to the cytoplasm. It catalyses the reaction 5-[(5-phospho-1-deoxy-D-ribulos-1-ylimino)methylamino]-1-(5-phospho-beta-D-ribosyl)imidazole-4-carboxamide + L-glutamine = D-erythro-1-(imidazol-4-yl)glycerol 3-phosphate + 5-amino-1-(5-phospho-beta-D-ribosyl)imidazole-4-carboxamide + L-glutamate + H(+). It functions in the pathway amino-acid biosynthesis; L-histidine biosynthesis; L-histidine from 5-phospho-alpha-D-ribose 1-diphosphate: step 5/9. In terms of biological role, IGPS catalyzes the conversion of PRFAR and glutamine to IGP, AICAR and glutamate. The HisF subunit catalyzes the cyclization activity that produces IGP and AICAR from PRFAR using the ammonia provided by the HisH subunit. The sequence is that of Imidazole glycerol phosphate synthase subunit HisF from Buchnera aphidicola subsp. Baizongia pistaciae (strain Bp).